Reading from the N-terminus, the 260-residue chain is E3 ubiquitin-protein ligase SRFP1 (260 aa).

The CHY-type zinc-finger motif lies at 11 to 80 (FGRMGFGCKH…VAQVCYNCGV (70 aa)). Residues Cys-18, His-20, Cys-31, Cys-32, Cys-38, Cys-41, His-42, His-50, Cys-62, Cys-65, Cys-75, Cys-78, Cys-87, Cys-90, His-103, Cys-104, Cys-107, Cys-110, His-120, Cys-121, Cys-124, Cys-127, His-136, and Cys-138 each coordinate Zn(2+). The segment at 82-146 (MGEYFCSACK…CCIENSMKNN (65 aa)) adopts a CTCHY-type zinc-finger fold. The RING-type; atypical zinc-finger motif lies at 147–190 (CPICYEYLFDSLRETSVLRCGHTMHLQCFHEMLKHDKFSCPICS).

As to expression, expressed in roots, leaves, nodes and panicles.

The protein localises to the nucleus. It is found in the cytoplasm. It catalyses the reaction S-ubiquitinyl-[E2 ubiquitin-conjugating enzyme]-L-cysteine + [acceptor protein]-L-lysine = [E2 ubiquitin-conjugating enzyme]-L-cysteine + N(6)-ubiquitinyl-[acceptor protein]-L-lysine.. It functions in the pathway protein modification; protein ubiquitination. Possesses E3 ubiquitin-protein ligase activity in vitro. Possesses transactivation activity in yeast cells. May modulate abiotic stress responses by negatively regulating antioxidant enzymes-mediated reactive oxygen species (ROS) removal. In Oryza sativa subsp. japonica (Rice), this protein is E3 ubiquitin-protein ligase SRFP1.